The primary structure comprises 104 residues: Large ribosomal subunit protein uL23 (104 aa).

It belongs to the universal ribosomal protein uL23 family. As to quaternary structure, part of the 50S ribosomal subunit. Contacts protein L29, and trigger factor when it is bound to the ribosome.

One of the early assembly proteins it binds 23S rRNA. One of the proteins that surrounds the polypeptide exit tunnel on the outside of the ribosome. Forms the main docking site for trigger factor binding to the ribosome. The chain is Large ribosomal subunit protein uL23 from Nostoc punctiforme (strain ATCC 29133 / PCC 73102).